Consider the following 548-residue polypeptide: CTP synthase (548 aa).

Residues 1–265 form an amidoligase domain region; the sequence is MTRYIFVTGG…DDIICDKLRI (265 aa). Serine 13 is a binding site for CTP. Residue serine 13 coordinates UTP. Residues 14–19 and aspartate 71 each bind ATP; that span reads SLGKGI. Mg(2+)-binding residues include aspartate 71 and glutamate 139. Residues 146 to 148, 186 to 191, and lysine 222 contribute to the CTP site; these read DIE and KTKPTQ. Residues 186–191 and lysine 222 contribute to the UTP site; that span reads KTKPTQ. One can recognise a Glutamine amidotransferase type-1 domain in the interval 290–541; the sequence is NIAMVGKYME…VNAALAYKAA (252 aa). Position 351 (glycine 351) interacts with L-glutamine. The active-site Nucleophile; for glutamine hydrolysis is cysteine 378. Residues 379–382, glutamate 402, and arginine 469 each bind L-glutamine; that span reads LGMQ. Active-site residues include histidine 514 and glutamate 516.

Belongs to the CTP synthase family. Homotetramer.

The enzyme catalyses UTP + L-glutamine + ATP + H2O = CTP + L-glutamate + ADP + phosphate + 2 H(+). The catalysed reaction is L-glutamine + H2O = L-glutamate + NH4(+). It catalyses the reaction UTP + NH4(+) + ATP = CTP + ADP + phosphate + 2 H(+). It participates in pyrimidine metabolism; CTP biosynthesis via de novo pathway; CTP from UDP: step 2/2. With respect to regulation, allosterically activated by GTP, when glutamine is the substrate; GTP has no effect on the reaction when ammonia is the substrate. The allosteric effector GTP functions by stabilizing the protein conformation that binds the tetrahedral intermediate(s) formed during glutamine hydrolysis. Inhibited by the product CTP, via allosteric rather than competitive inhibition. Functionally, catalyzes the ATP-dependent amination of UTP to CTP with either L-glutamine or ammonia as the source of nitrogen. Regulates intracellular CTP levels through interactions with the four ribonucleotide triphosphates. The protein is CTP synthase of Chromohalobacter salexigens (strain ATCC BAA-138 / DSM 3043 / CIP 106854 / NCIMB 13768 / 1H11).